Consider the following 80-residue polypeptide: Bacteriochlorophyll c-binding protein (80 aa).

A bacteriochlorophyll c is bound at residue His25. The segment at 49–80 (PGVSRSGSGEGAFSSSPSNGFRPKRIRSRFNR) is disordered. Positions 54 to 80 (SGSGEGAFSSSPSNGFRPKRIRSRFNR) are excised as a propeptide. Residues 70-80 (RPKRIRSRFNR) show a composition bias toward basic residues.

It belongs to the BChl C/E-binding protein family.

It is found in the chlorosome. Its subcellular location is the chlorosome envelope. Component of the photosynthetic apparatus. The light harvesting B740 complex binds bacteriochlorophyll c. This chain is Bacteriochlorophyll c-binding protein (cmsA), found in Chloroflexus aurantiacus (strain ATCC 29366 / DSM 635 / J-10-fl).